We begin with the raw amino-acid sequence, 210 residues long: Mediator of RNA polymerase II transcription subunit 20 (210 aa).

The protein belongs to the Mediator complex subunit 20 family. In terms of assembly, component of the Mediator complex, which is composed of at least 21 subunits that form three structurally distinct submodules. The Mediator head module contains MED6, MED8, MED11, SRB4/MED17, SRB5/MED18, ROX3/MED19, SRB2/MED20 and SRB6/MED22, the middle module contains MED1, MED4, NUT1/MED5, MED7, CSE2/MED9, NUT2/MED10, SRB7/MED21 and SOH1/MED31, and the tail module contains MED2, PGD1/MED3, RGR1/MED14, GAL11/MED15 and SIN4/MED16. The head and the middle modules interact directly with RNA polymerase II, whereas the elongated tail module interacts with gene-specific regulatory proteins. MED1 interacts directly with MED4 and MED7. SRB2/MED20 interacts directly with SRB4/MED17 and SRB5/MED18.

The protein localises to the nucleus. Functionally, component of the Mediator complex, a coactivator involved in the regulated transcription of nearly all RNA polymerase II-dependent genes. Mediator functions as a bridge to convey information from gene-specific regulatory proteins to the basal RNA polymerase II transcription machinery. The Mediator complex, having a compact conformation in its free form, is recruited to promoters by direct interactions with regulatory proteins and serves for the assembly of a functional preinitiation complex with RNA polymerase II and the general transcription factors. The Mediator complex unfolds to an extended conformation and partially surrounds RNA polymerase II, specifically interacting with the unphosphorylated form of the C-terminal domain (CTD) of RNA polymerase II. The Mediator complex dissociates from the RNA polymerase II holoenzyme and stays at the promoter when transcriptional elongation begins. The protein is Mediator of RNA polymerase II transcription subunit 20 (SRB2) of Saccharomyces cerevisiae (strain ATCC 204508 / S288c) (Baker's yeast).